The following is a 402-amino-acid chain: Multidrug resistance protein MdtH (402 aa).

At 1–12 the chain is on the cytoplasmic side; it reads MSRVSQARNLGK. The helical transmembrane segment at 13–33 threads the bilayer; the sequence is YFLLIDNMLVVLGFFVVFPLI. Residues 34–98 lie on the Periplasmic side of the membrane; it reads SIRFVDQMGW…GFATMGIAHE (65 aa). The chain crosses the membrane as a helical span at residues 99–116; sequence PWLLWFSCFLSGLGGTLF. At 117–138 the chain is on the cytoplasmic side; sequence DPPRSALVVKLIRPEQRDRFFS. The chain crosses the membrane as a helical span at residues 139-159; the sequence is LLMMQDSAGAVIGALLGSWLL. At 160–164 the chain is on the periplasmic side; sequence QYDFR. A helical transmembrane segment spans residues 165–185; the sequence is LVCATGAILFILCALFNAWLL. The Cytoplasmic segment spans residues 186-213; the sequence is PAWKLSTVRTPVREGMRRVMSDKRFVTY. Residues 214 to 234 form a helical membrane-spanning segment; sequence VLTLAGYYMLAVQVMLMLPIM. Over 235-243 the chain is Periplasmic; the sequence is VNDIAGSPA. Residues 244–264 traverse the membrane as a helical segment; the sequence is AVKWMYAIEACLSLTLLYPIA. The Cytoplasmic portion of the chain corresponds to 265–276; sequence RWSEKRFRLEHR. The helical transmembrane segment at 277–297 threads the bilayer; that stretch reads LMAGLLVMSLSMLPIGMVGNL. Over 298–299 the chain is Periplasmic; it reads QQ. A helical transmembrane segment spans residues 300-320; that stretch reads LFTLICAFYIGSVIAEPARET. Residues 321–339 are Cytoplasmic-facing; it reads LSASLADARARGSYMGFSR. The helical transmembrane segment at 340–360 threads the bilayer; the sequence is LGLAIGGAIGYIGGGWLFDMG. Residues 361 to 367 are Periplasmic-facing; the sequence is KALAQPE. Residues 368-388 form a helical membrane-spanning segment; it reads LPWMMLGIIGFITFLALGWQF. Topologically, residues 389–402 are cytoplasmic; it reads SHKRTPRRMLEPGA.

This sequence belongs to the major facilitator superfamily. DHA1 family. MdtH (TC 2.A.1.2.21) subfamily.

It localises to the cell inner membrane. The polypeptide is Multidrug resistance protein MdtH (Salmonella typhimurium (strain LT2 / SGSC1412 / ATCC 700720)).